Here is a 244-residue protein sequence, read N- to C-terminus: 1-(5-phosphoribosyl)-5-[(5-phosphoribosylamino)methylideneamino] imidazole-4-carboxamide isomerase (244 aa).

Asp-10 serves as the catalytic Proton acceptor. The active-site Proton donor is the Asp-132.

Belongs to the HisA/HisF family.

The protein resides in the cytoplasm. It catalyses the reaction 1-(5-phospho-beta-D-ribosyl)-5-[(5-phospho-beta-D-ribosylamino)methylideneamino]imidazole-4-carboxamide = 5-[(5-phospho-1-deoxy-D-ribulos-1-ylimino)methylamino]-1-(5-phospho-beta-D-ribosyl)imidazole-4-carboxamide. It functions in the pathway amino-acid biosynthesis; L-histidine biosynthesis; L-histidine from 5-phospho-alpha-D-ribose 1-diphosphate: step 4/9. In Xanthomonas campestris pv. campestris (strain 8004), this protein is 1-(5-phosphoribosyl)-5-[(5-phosphoribosylamino)methylideneamino] imidazole-4-carboxamide isomerase.